Reading from the N-terminus, the 365-residue chain is Putative clathrin assembly protein At4g40080 (365 aa).

An ENTH domain is found at 29-167; that stretch reads NTKSKTLSFH…STSRIMGFFI (139 aa).

Its subcellular location is the membrane. It localises to the clathrin-coated pit. It is found in the golgi apparatus. The protein resides in the cytoplasmic vesicle. The protein localises to the clathrin-coated vesicle. This Arabidopsis thaliana (Mouse-ear cress) protein is Putative clathrin assembly protein At4g40080.